A 345-amino-acid polypeptide reads, in one-letter code: N-glycosylase/DNA lyase (345 aa).

Residues Asn-149, Arg-154, and Arg-204 each contribute to the DNA site. The Schiff-base intermediate with DNA role is filled by Lys-249. Positions 266 and 268 each coordinate 8-oxoguanine. DNA contacts are provided by His-270 and Gln-287. The 8-oxoguanine site is built by Gln-315 and Phe-319. Over residues 324–334 the composition is skewed to basic and acidic residues; the sequence is RQSRHAQEPPA. The segment at 324–345 is disordered; the sequence is RQSRHAQEPPAKRRKGSKGPEG. A compositionally biased stretch (basic residues) spans 335-345; the sequence is KRRKGSKGPEG.

This sequence belongs to the type-1 OGG1 family. In terms of tissue distribution, ubiquitous.

The protein resides in the nucleus. It is found in the nucleoplasm. It localises to the nucleus speckle. The protein localises to the nucleus matrix. Its subcellular location is the mitochondrion. It catalyses the reaction 2'-deoxyribonucleotide-(2'-deoxyribose 5'-phosphate)-2'-deoxyribonucleotide-DNA = a 3'-end 2'-deoxyribonucleotide-(2,3-dehydro-2,3-deoxyribose 5'-phosphate)-DNA + a 5'-end 5'-phospho-2'-deoxyribonucleoside-DNA + H(+). Functionally, DNA repair enzyme that incises DNA at 8-oxoG residues. Excises 7,8-dihydro-8-oxoguanine and 2,6-diamino-4-hydroxy-5-N-methylformamidopyrimidine (FAPY) from damaged DNA. Has a beta-lyase activity that nicks DNA 3' to the lesion. This chain is N-glycosylase/DNA lyase (OGG1), found in Homo sapiens (Human).